Here is a 93-residue protein sequence, read N- to C-terminus: Small ribosomal subunit protein uS19 (93 aa).

It belongs to the universal ribosomal protein uS19 family.

Functionally, protein S19 forms a complex with S13 that binds strongly to the 16S ribosomal RNA. The polypeptide is Small ribosomal subunit protein uS19 (Geotalea uraniireducens (strain Rf4) (Geobacter uraniireducens)).